The following is a 294-amino-acid chain: Nucleotide-binding protein Smlt1108 (294 aa).

Glycine 16–serine 23 serves as a coordination point for ATP. Aspartate 69–glycine 72 provides a ligand contact to GTP.

This sequence belongs to the RapZ-like family.

In terms of biological role, displays ATPase and GTPase activities. This is Nucleotide-binding protein Smlt1108 from Stenotrophomonas maltophilia (strain K279a).